Reading from the N-terminus, the 114-residue chain is uncharacterized protein (114 aa).

This is an uncharacterized protein from Bacillus subtilis (strain 168).